Consider the following 31-residue polypeptide: Cytochrome b6-f complex subunit 6 (31 aa).

The chain crosses the membrane as a helical span at residues I4 to G24.

This sequence belongs to the PetL family. In terms of assembly, the 4 large subunits of the cytochrome b6-f complex are cytochrome b6, subunit IV (17 kDa polypeptide, PetD), cytochrome f and the Rieske protein, while the 4 small subunits are PetG, PetL, PetM and PetN. The complex functions as a dimer.

The protein resides in the plastid. The protein localises to the chloroplast thylakoid membrane. Functionally, component of the cytochrome b6-f complex, which mediates electron transfer between photosystem II (PSII) and photosystem I (PSI), cyclic electron flow around PSI, and state transitions. PetL is important for photoautotrophic growth as well as for electron transfer efficiency and stability of the cytochrome b6-f complex. The polypeptide is Cytochrome b6-f complex subunit 6 (Jasminum nudiflorum (Winter jasmine)).